Consider the following 316-residue polypeptide: Cuticle collagen 7 (316 aa).

Residues 1 to 34 (MSSATFLSVMAGLSGIVVFGALISVFHIYSDINS) form the signal peptide. 2 disordered regions span residues 78–269 (KQSQ…DAAY) and 281–316 (HRNV…HVQA). The segment covering 79–90 (QSQCNCGQQASN) has biased composition (polar residues). Triple-helical region stretches follow at residues 94 to 126 (GPPG…AGPS), 139 to 198 (GLPG…PGKS), and 204 to 263 (GLPG…DGTP). Composition is skewed to low complexity over residues 110 to 125 (QPGQ…VAGP), 137 to 147 (PQGLPGPAGVP), and 177 to 198 (AGSA…PGKS). Residues 209 to 221 (SGAPGPQGPPGAP) are compositionally biased toward pro residues. A compositionally biased stretch (low complexity) spans 241-260 (PNGQPGHPGQDGQPGAPGND).

Belongs to the cuticular collagen family. Collagen polypeptide chains are complexed within the cuticle by disulfide bonds and other types of covalent cross-links.

In terms of biological role, nematode cuticles are composed largely of collagen-like proteins. The cuticle functions both as an exoskeleton and as a barrier to protect the worm from its environment. In Caenorhabditis elegans, this protein is Cuticle collagen 7 (col-7).